A 371-amino-acid polypeptide reads, in one-letter code: Enoyl-[acyl-carrier-protein] reductase [NADH] 2, chloroplastic (371 aa).

The N-terminal 67 residues, 1–67 (MGASVTTGLQ…SLNHKRFAVR (67 aa)), are a transit peptide targeting the chloroplast. NAD(+) contacts are provided by residues glycine 87, tyrosine 94, 151–152 (DA), 198–199 (SL), and leucine 248. Residues tyrosine 250 and tyrosine 260 each act as proton acceptor in the active site. Residues lysine 268 and 298–302 (LGSRA) contribute to the NAD(+) site.

Belongs to the short-chain dehydrogenases/reductases (SDR) family. FabI subfamily. As to quaternary structure, homotetramer.

The protein localises to the plastid. It localises to the chloroplast. It carries out the reaction a 2,3-saturated acyl-[ACP] + NAD(+) = a (2E)-enoyl-[ACP] + NADH + H(+). Its pathway is lipid metabolism; fatty acid biosynthesis. In terms of biological role, catalyzes the NAD-dependent reduction of a carbon-carbon double bond in an enoyl moiety that is covalently linked to an acyl carrier protein (ACP). Catalyzes the last reduction step in the de novo synthesis cycle of fatty acids. Involved in the elongation cycle of fatty acids which are used in lipid metabolism. Required for normal plant growth. This Oryza sativa subsp. japonica (Rice) protein is Enoyl-[acyl-carrier-protein] reductase [NADH] 2, chloroplastic.